The primary structure comprises 107 residues: Keratin, type I cytoskeletal 20 (107 aa).

Residues 1–7 (GNLWVGN) are head. The tract at residues 8 to 43 (EKMTMKNLNDRLASYLEKVRSLEQSNSKFELQIKQW) is coil 1A. Residues 8-107 (EKMTMKNLND…ETERGIRLAV (100 aa)) enclose the IF rod domain. Residues 44-61 (YESNTPGISRDHSAYLQQ) form a linker 1 region. A coil 1B region spans residues 62–107 (IQDLRNQIRDAQLQNARCVLQIDNAKLAAEDFRLKYETERGIRLAV).

The protein belongs to the intermediate filament family. Heterotetramer of two type I and two type II keratins. Associates with KRT8.

In terms of biological role, plays a significant role in maintaining keratin filament organization in intestinal epithelia. When phosphorylated, plays a role in the secretion of mucin in the small intestine. This chain is Keratin, type I cytoskeletal 20, found in Sus scrofa (Pig).